Reading from the N-terminus, the 115-residue chain is NADH-ubiquinone oxidoreductase chain 3 (115 aa).

3 consecutive transmembrane segments (helical) span residues 3-23 (IMITLFINMSLASLLVLIAFW), 55-75 (FFLVAITFLLFDLEIALLLPL), and 87-107 (MLTTALVLILLLALGLAYEWL).

It belongs to the complex I subunit 3 family. As to quaternary structure, core subunit of respiratory chain NADH dehydrogenase (Complex I) which is composed of 45 different subunits. Interacts with TMEM186. Interacts with TMEM242.

It is found in the mitochondrion inner membrane. It catalyses the reaction a ubiquinone + NADH + 5 H(+)(in) = a ubiquinol + NAD(+) + 4 H(+)(out). Its function is as follows. Core subunit of the mitochondrial membrane respiratory chain NADH dehydrogenase (Complex I) which catalyzes electron transfer from NADH through the respiratory chain, using ubiquinone as an electron acceptor. Essential for the catalytic activity of complex I. In Dasypus novemcinctus (Nine-banded armadillo), this protein is NADH-ubiquinone oxidoreductase chain 3.